The following is a 33-amino-acid chain: Thrombin-like enzyme RP34 (33 aa).

The 33-residue stretch at valine 1–isoleucine 33 folds into the Peptidase S1 domain.

The protein belongs to the peptidase S1 family. Snake venom subfamily. Homodimer. Expressed by the venom gland.

It is found in the secreted. The enzyme catalyses Selective cleavage of Arg-|-Xaa bond in fibrinogen, to form fibrin, and release fibrinopeptide A. The specificity of further degradation of fibrinogen varies with species origin of the enzyme.. Its function is as follows. Thrombin-like snake venom serine protease that displays clotting activity on fibrinogen. Shows both arginine-ester hydrolase and amidase activities on synthetic substrates. Also shows proteolytic activity toward casein. This chain is Thrombin-like enzyme RP34, found in Cerastes cerastes (Horned desert viper).